The chain runs to 656 residues: Ribosome quality control complex subunit 1 (656 aa).

Residues 1-11 (MSSRALRKLQR) show a composition bias toward basic residues. Disordered stretches follow at residues 1-35 (MSSR…FSST), 51-122 (NNAI…LESS), and 634-656 (LFTS…GQGD). Over residues 17 to 32 (LLEEALDSESDEDDEF) the composition is skewed to acidic residues. The span at 51 to 63 (NNAINSEAEKSVS) shows a compositional bias: basic and acidic residues. 3 positions are modified to phosphoserine: serine 56, serine 61, and serine 63. The segment covering 83-101 (KKAKNKKKKKKQQKKKKVT) has biased composition (basic residues). Residues 102–122 (GKRDLDNQSSDNEKLEGLESS) are compositionally biased toward basic and acidic residues. Residues serine 110 and serine 111 each carry the phosphoserine modification.

It belongs to the TCF25 family. As to quaternary structure, component of the ribosome quality control complex (RQC), composed of the E3 ubiquitin ligase rkr1/ltn1, rqc1 and mtr1/rqc2, as well as cdc48 and its ubiquitin-binding cofactors. RQC forms a stable complex with 60S ribosomal subunits.

Its subcellular location is the cytoplasm. In terms of biological role, component of the ribosome quality control complex (RQC), a ribosome-associated complex that mediates ubiquitination and extraction of incompletely synthesized nascent chains for proteasomal degradation. Within the RQC complex, rqc1 is essential for the recruitment of cdc48 to incompletely synthesized nascent polypeptides that are ubiquitinated by rkr1/ltn1. The protein is Ribosome quality control complex subunit 1 of Schizosaccharomyces pombe (strain 972 / ATCC 24843) (Fission yeast).